Consider the following 384-residue polypeptide: S-adenosylmethionine synthase (384 aa).

His15 lines the ATP pocket. Asp17 lines the Mg(2+) pocket. Glu43 contacts K(+). Residues Glu56 and Gln99 each coordinate L-methionine. Residues 99–109 form a flexible loop region; sequence QSPDINQGVDK. ATP is bound by residues 164-166, 230-231, Asp239, 245-246, Ala262, and Lys266; these read DAK, RF, and RK. Position 239 (Asp239) interacts with L-methionine. Lys270 lines the L-methionine pocket.

This sequence belongs to the AdoMet synthase family. Homotetramer; dimer of dimers. Requires Mg(2+) as cofactor. K(+) serves as cofactor.

Its subcellular location is the cytoplasm. It catalyses the reaction L-methionine + ATP + H2O = S-adenosyl-L-methionine + phosphate + diphosphate. The protein operates within amino-acid biosynthesis; S-adenosyl-L-methionine biosynthesis; S-adenosyl-L-methionine from L-methionine: step 1/1. Functionally, catalyzes the formation of S-adenosylmethionine (AdoMet) from methionine and ATP. The overall synthetic reaction is composed of two sequential steps, AdoMet formation and the subsequent tripolyphosphate hydrolysis which occurs prior to release of AdoMet from the enzyme. The protein is S-adenosylmethionine synthase of Aliivibrio fischeri (strain ATCC 700601 / ES114) (Vibrio fischeri).